Reading from the N-terminus, the 1727-residue chain is DNA-directed RNA polymerase II subunit rpb1 (1727 aa).

Zn(2+)-binding residues include Cys-66, Cys-69, Cys-76, His-79, Cys-106, Cys-109, Cys-147, and Cys-175. Mg(2+) contacts are provided by Asp-486, Asp-488, and Asp-490. Positions 819-831 (PQEFFFHAMGGRE) are bridging helix. Residue Lys-1266 forms a Glycyl lysine isopeptide (Lys-Gly) (interchain with G-Cter in ubiquitin) linkage. Disordered regions lie at residues 1478–1512 (EPSN…YDAP) and 1551–1727 (PTYS…NKKK). Over residues 1480–1505 (SNVSYPDTPGSQTPSYSYGDGSTTPF) the composition is skewed to polar residues. Repeat copies occupy residues 1553–1559 (YSPTSPS), 1560–1566 (YSPTSPS), 1567–1573 (YSPTSPS), 1574–1580 (YSPTSPS), 1581–1587 (YSPTSPS), 1588–1594 (YSPTSPS), 1595–1601 (YSPTSPF), 1602–1608 (YSPTSPS), 1609–1615 (YSPTSPS), 1616–1622 (YSPTSPS), 1623–1629 (YSPTSPS), 1630–1636 (YSPTSPS), 1637–1643 (YSPTSPS), 1644–1650 (YSPTSPS), 1651–1657 (YSPTSPS), 1658–1664 (YSPTSPS), 1665–1671 (YSPTSPS), 1672–1678 (YSPTSPS), 1679–1685 (YSPTSPS), 1686–1692 (YSPSSPS), 1693–1699 (YSPSSPS), 1700–1706 (YSPSSPS), and 1707–1713 (YSPSSPT). The interval 1553 to 1713 (YSPTSPSYSP…SPSYSPSSPT (161 aa)) is C-terminal domain (CTD); 23 X 7 AA tandem repeats of Y-S-P-[ST]-S-P-[FST].

This sequence belongs to the RNA polymerase beta' chain family. In terms of assembly, component of the RNA polymerase II (Pol II) complex consisting of 12 subunits. The tandem heptapeptide repeats in the C-terminal domain (CTD) can be highly phosphorylated. The phosphorylation activates Pol II. Phosphorylation occurs mainly at residues 'Ser-2' and 'Ser-5' of the heptapeptide repeat. The phosphorylation state is believed to result from the balanced action of site-specific CTD kinases and phosphatase, and a 'CTD code' that specifies the position of Pol II within the transcription cycle has been proposed. In terms of processing, following transcription stress, the elongating form of RNA polymerase II (RNA pol IIo) is polyubiquitinated via 'Lys-63'-linkages on Lys-1266 at DNA damage sites without leading to degradation: ubiquitination promotes RNA pol IIo backtracking to allow access by the transcription-coupled nucleotide excision repair (TC-NER) machinery. Subsequent DEF1-dependent polyubiquitination by the elongin complex via 'Lys-48'-linkages may lead to proteasome-mediated degradation; presumably at stalled RNA pol II where TC-NER has failed, to halt global transcription and enable 'last resort' DNA repair pathways.

The protein localises to the nucleus. It carries out the reaction RNA(n) + a ribonucleoside 5'-triphosphate = RNA(n+1) + diphosphate. Functionally, DNA-dependent RNA polymerase catalyzes the transcription of DNA into RNA using the four ribonucleoside triphosphates as substrates. Largest and catalytic component of RNA polymerase II which synthesizes mRNA precursors and many functional non-coding RNAs. Forms the polymerase active center together with the second largest subunit. Pol II is the central component of the basal RNA polymerase II transcription machinery. It is composed of mobile elements that move relative to each other. RPB1 is part of the core element with the central large cleft, the clamp element that moves to open and close the cleft and the jaws that are thought to grab the incoming DNA template. At the start of transcription, a single-stranded DNA template strand of the promoter is positioned within the central active site cleft of Pol II. A bridging helix emanates from RPB1 and crosses the cleft near the catalytic site and is thought to promote translocation of Pol II by acting as a ratchet that moves the RNA-DNA hybrid through the active site by switching from straight to bent conformations at each step of nucleotide addition. During transcription elongation, Pol II moves on the template as the transcript elongates. Elongation is influenced by the phosphorylation status of the C-terminal domain (CTD) of Pol II largest subunit (RPB1), which serves as a platform for assembly of factors that regulate transcription initiation, elongation, termination and mRNA processing. This Dictyostelium discoideum (Social amoeba) protein is DNA-directed RNA polymerase II subunit rpb1 (polr2a).